Reading from the N-terminus, the 520-residue chain is Bifunctional purine biosynthesis protein PurH (520 aa).

An MGS-like domain is found at 1–150; that stretch reads MSDDRKAIKR…KNHPSVAVVV (150 aa).

The protein belongs to the PurH family.

The enzyme catalyses (6R)-10-formyltetrahydrofolate + 5-amino-1-(5-phospho-beta-D-ribosyl)imidazole-4-carboxamide = 5-formamido-1-(5-phospho-D-ribosyl)imidazole-4-carboxamide + (6S)-5,6,7,8-tetrahydrofolate. The catalysed reaction is IMP + H2O = 5-formamido-1-(5-phospho-D-ribosyl)imidazole-4-carboxamide. The protein operates within purine metabolism; IMP biosynthesis via de novo pathway; 5-formamido-1-(5-phospho-D-ribosyl)imidazole-4-carboxamide from 5-amino-1-(5-phospho-D-ribosyl)imidazole-4-carboxamide (10-formyl THF route): step 1/1. It functions in the pathway purine metabolism; IMP biosynthesis via de novo pathway; IMP from 5-formamido-1-(5-phospho-D-ribosyl)imidazole-4-carboxamide: step 1/1. This chain is Bifunctional purine biosynthesis protein PurH, found in Corynebacterium glutamicum (strain R).